Reading from the N-terminus, the 122-residue chain is Large ribosomal subunit protein uL14 (122 aa).

The protein belongs to the universal ribosomal protein uL14 family. As to quaternary structure, part of the 50S ribosomal subunit. Forms a cluster with proteins L3 and L19. In the 70S ribosome, L14 and L19 interact and together make contacts with the 16S rRNA in bridges B5 and B8.

Its function is as follows. Binds to 23S rRNA. Forms part of two intersubunit bridges in the 70S ribosome. The protein is Large ribosomal subunit protein uL14 of Desulfotalea psychrophila (strain LSv54 / DSM 12343).